Reading from the N-terminus, the 72-residue chain is Translation initiation factor IF-1 (72 aa).

The S1-like domain maps to 1 to 72; that stretch reads MAKEGAIEVE…TRGRIVYRYK (72 aa).

This sequence belongs to the IF-1 family. Component of the 30S ribosomal translation pre-initiation complex which assembles on the 30S ribosome in the order IF-2 and IF-3, IF-1 and N-formylmethionyl-tRNA(fMet); mRNA recruitment can occur at any time during PIC assembly.

The protein resides in the cytoplasm. One of the essential components for the initiation of protein synthesis. Stabilizes the binding of IF-2 and IF-3 on the 30S subunit to which N-formylmethionyl-tRNA(fMet) subsequently binds. Helps modulate mRNA selection, yielding the 30S pre-initiation complex (PIC). Upon addition of the 50S ribosomal subunit IF-1, IF-2 and IF-3 are released leaving the mature 70S translation initiation complex. In Corynebacterium diphtheriae (strain ATCC 700971 / NCTC 13129 / Biotype gravis), this protein is Translation initiation factor IF-1.